Reading from the N-terminus, the 369-residue chain is Peptide chain release factor 1 (369 aa).

Residue Q234 is modified to N5-methylglutamine.

Belongs to the prokaryotic/mitochondrial release factor family. In terms of processing, methylated by PrmC. Methylation increases the termination efficiency of RF1.

It localises to the cytoplasm. Functionally, peptide chain release factor 1 directs the termination of translation in response to the peptide chain termination codons UAG and UAA. This Kocuria rhizophila (strain ATCC 9341 / DSM 348 / NBRC 103217 / DC2201) protein is Peptide chain release factor 1.